The following is a 201-amino-acid chain: Regulator of G-protein signaling 1 (201 aa).

Residues 75–191 (SLEKLLVSEE…LKSEIFFRLA (117 aa)) enclose the RGS domain.

It is found in the cell membrane. The protein localises to the cytoplasm. The protein resides in the cytosol. Regulates G protein-coupled receptor signaling cascades, including signaling downstream of the N-formylpeptide chemoattractant receptors and leukotriene receptors. Inhibits B cell chemotaxis. Inhibits signal transduction by increasing the GTPase activity of G protein alpha subunits, thereby driving them into their inactive GDP-bound form. In Xenopus laevis (African clawed frog), this protein is Regulator of G-protein signaling 1 (rgs1).